A 210-amino-acid chain; its full sequence is ATP phosphoribosyltransferase (210 aa).

It belongs to the ATP phosphoribosyltransferase family. Short subfamily. As to quaternary structure, heteromultimer composed of HisG and HisZ subunits.

The protein resides in the cytoplasm. It catalyses the reaction 1-(5-phospho-beta-D-ribosyl)-ATP + diphosphate = 5-phospho-alpha-D-ribose 1-diphosphate + ATP. It participates in amino-acid biosynthesis; L-histidine biosynthesis; L-histidine from 5-phospho-alpha-D-ribose 1-diphosphate: step 1/9. Its function is as follows. Catalyzes the condensation of ATP and 5-phosphoribose 1-diphosphate to form N'-(5'-phosphoribosyl)-ATP (PR-ATP). Has a crucial role in the pathway because the rate of histidine biosynthesis seems to be controlled primarily by regulation of HisG enzymatic activity. The protein is ATP phosphoribosyltransferase (hisG) of Synechocystis sp. (strain ATCC 27184 / PCC 6803 / Kazusa).